The following is a 672-amino-acid chain: Single-strand DNA endonuclease ASTE1 (672 aa).

Positions 349–398 (TFLHTQVENMQRPNAHRISQPIRQIIYGLLLNGPSHAEDIAQNTLPSQLL) are interaction with SHLD2.

It belongs to the asteroid family. Interacts with SHLD1, SHLD2, SHLD3, RIF1 and MAD2L2/REV7.

Functionally, structure-specific DNA endonuclease that specifically cleaves single-stranded DNA and 3' overhang DNA. Contributes to the control of DNA double-strand break repair choice by antagonizing BRCA1-dependent homologous recombination (HR) and promoting non-homologous end-joining (NHEJ). Recruited to the single-stranded DNA ends by SHLD2 and cleaves the 3' exposed DNA ends, therefore inhibiting DNA end resection (necessary for HR) and promoting DNA end protection (necessary for NHEJ). The polypeptide is Single-strand DNA endonuclease ASTE1 (Aste1) (Mus musculus (Mouse)).